The primary structure comprises 1063 residues: Cobalt-zinc-cadmium resistance protein CzcA (1063 aa).

The next 12 helical transmembrane spans lie at 14–34, 350–370, 371–391, 395–415, 452–472, 487–507, 534–554, 883–903, 906–926, 937–957, 981–1001, and 1013–1033; these read WLVLLAVFGMAGLGIFSYNRL, GAVLVIVILFLFLGNIRAALI, TATIIPLAMLFTFTGMVNYKI, LMSLGALDFGIIIDGAVVIVE, LIFGQLIIMIVYLPIFALTGV, ALLGAMILSVTFVPAAVALFI, LANTAVVLTFAAVSIVLCVAI, VVVPVALLLVFVLLFAMFNNI, GLLVFTGIPFALTGGILALWI, VGFIALCGVAVLNGLVMLSFI, PVLMTALVASLGFVPMAIATG, and VVIGGILSSTALTLLVLPVLY. Residues 1040-1063 form a disordered region; that stretch reads DEDAEDTREPVTQTHQPDQGRQPA. A compositionally biased stretch (polar residues) spans 1049–1063; that stretch reads PVTQTHQPDQGRQPA.

This sequence belongs to the resistance-nodulation-cell division (RND) (TC 2.A.6) family.

It localises to the cell inner membrane. Functionally, has a low cation transport activity for cobalt, it is essential for the expression of cobalt, zinc, and cadmium resistance. CzcA and CzcB together would act in zinc efflux nearly as effectively as the complete CZC efflux system (CzcABC). The polypeptide is Cobalt-zinc-cadmium resistance protein CzcA (czcA) (Cupriavidus metallidurans (strain ATCC 43123 / DSM 2839 / NBRC 102507 / CH34) (Ralstonia metallidurans)).